Consider the following 466-residue polypeptide: Cysteine--tRNA ligase (466 aa).

Cysteine 28 lines the Zn(2+) pocket. Residues 30-40 (PTVYNYIHIGN) carry the 'HIGH' region motif. Cysteine 208, histidine 233, and glutamate 237 together coordinate Zn(2+). The short motif at 265 to 269 (KMSKS) is the 'KMSKS' region element. Lysine 268 lines the ATP pocket.

This sequence belongs to the class-I aminoacyl-tRNA synthetase family. As to quaternary structure, monomer. Requires Zn(2+) as cofactor.

It localises to the cytoplasm. It carries out the reaction tRNA(Cys) + L-cysteine + ATP = L-cysteinyl-tRNA(Cys) + AMP + diphosphate. This chain is Cysteine--tRNA ligase, found in Staphylococcus epidermidis (strain ATCC 35984 / DSM 28319 / BCRC 17069 / CCUG 31568 / BM 3577 / RP62A).